Consider the following 336-residue polypeptide: Biotin synthase (336 aa).

The 228-residue stretch at 54 to 281 folds into the Radical SAM core domain; it reads QAIQLSTLLS…KSYVRLSAGR (228 aa). Residues cysteine 69, cysteine 73, and cysteine 76 each contribute to the [4Fe-4S] cluster site. [2Fe-2S] cluster contacts are provided by cysteine 113, cysteine 144, cysteine 204, and arginine 276.

It belongs to the radical SAM superfamily. Biotin synthase family. In terms of assembly, homodimer. The cofactor is [4Fe-4S] cluster. It depends on [2Fe-2S] cluster as a cofactor.

It carries out the reaction (4R,5S)-dethiobiotin + (sulfur carrier)-SH + 2 reduced [2Fe-2S]-[ferredoxin] + 2 S-adenosyl-L-methionine = (sulfur carrier)-H + biotin + 2 5'-deoxyadenosine + 2 L-methionine + 2 oxidized [2Fe-2S]-[ferredoxin]. It participates in cofactor biosynthesis; biotin biosynthesis; biotin from 7,8-diaminononanoate: step 2/2. Its function is as follows. Catalyzes the conversion of dethiobiotin (DTB) to biotin by the insertion of a sulfur atom into dethiobiotin via a radical-based mechanism. This Actinobacillus pleuropneumoniae serotype 7 (strain AP76) protein is Biotin synthase.